The primary structure comprises 264 residues: Regulatory protein RecX (264 aa).

Belongs to the RecX family.

It localises to the cytoplasm. In terms of biological role, modulates RecA activity. This chain is Regulatory protein RecX, found in Limosilactobacillus reuteri (strain DSM 20016) (Lactobacillus reuteri).